The sequence spans 420 residues: WD repeat-containing protein jip5 (420 aa).

WD repeat units lie at residues 9–48 (PLSADLFSQALHPKEPVVSVGLSSGHVQTFRLPSDEVDSD), 72–111 (RHKGSCRCLGFGVDGEMLYSAGTDGLVKAAKAETGVVENK), 117–158 (DKNG…SKVS), 221–262 (VSSV…DQDE), 271–314 (GGGE…VVSE), and 318–355 (DETEGVVGLGFDVEGRMVSGGGQIVKVWHEAVDSGDGV). The tract at residues 39 to 63 (RLPSDEVDSDDDGASTSSSRTGRGH) is disordered. A disordered region spans residues 350-420 (DSGDGVNGNE…QAVMAFHDLD (71 aa)). The segment covering 368 to 387 (DDSDEDSDDGDDDDDSGDSD) has biased composition (acidic residues). A compositionally biased stretch (basic residues) spans 394-406 (DARKKRKKGKTPK).

The protein belongs to the WD repeat WDR55 family.

It is found in the nucleus. It localises to the nucleolus. This Aspergillus terreus (strain NIH 2624 / FGSC A1156) protein is WD repeat-containing protein jip5 (jip5).